Consider the following 83-residue polypeptide: U25-theraphotoxin-Cg1a (83 aa).

The signal sequence occupies residues 1–23 (MRFHTLLFLSFLLLVSCALICTA). The propeptide occupies 24-48 (QHPGLEKSGMFHENVGKGQHIEEKR). Cystine bridges form between cysteine 50-cysteine 66, cysteine 57-cysteine 71, and cysteine 65-cysteine 81.

This sequence belongs to the neurotoxin 07 (Beta/delta-agtx) family. 03 (aga-4) subfamily. JZTX sub-subfamily. Expressed by the venom gland.

It is found in the secreted. In terms of biological role, inhibits TTX-sensitive sodium currents in rat dorsal root ganglion (DRG) neurons. This chain is U25-theraphotoxin-Cg1a, found in Chilobrachys guangxiensis (Chinese earth tiger tarantula).